Reading from the N-terminus, the 170-residue chain is Photosystem I assembly protein Ycf3 (170 aa).

TPR repeat units follow at residues 35–68 (AFTYYRDGMLAQSEGNYAEALQNYYEAMRLEIDP), 72–105 (SYILYNIGLIHTSNGEHTKALEYYFRALERNPFL), and 120–153 (GEQAILQGDSEIAEAWFDQAAEYWKQAIALTPGN).

Belongs to the Ycf3 family.

Its subcellular location is the plastid. The protein localises to the chloroplast thylakoid membrane. Its function is as follows. Essential for the assembly of the photosystem I (PSI) complex. May act as a chaperone-like factor to guide the assembly of the PSI subunits. In Oryza sativa (Rice), this protein is Photosystem I assembly protein Ycf3.